The chain runs to 473 residues: Glutamate--tRNA ligase 2 (473 aa).

Residues 11–21 (PSPTGYLHIGG) carry the 'HIGH' region motif. Positions 113-133 (KARAEGRPPRYDGRWRDRDPS) are enriched in basic and acidic residues. The segment at 113-136 (KARAEGRPPRYDGRWRDRDPSEAP) is disordered. A 'KMSKS' region motif is present at residues 240–244 (KLSKR). Lys243 serves as a coordination point for ATP.

This sequence belongs to the class-I aminoacyl-tRNA synthetase family. Glutamate--tRNA ligase type 1 subfamily. Monomer.

It is found in the cytoplasm. The enzyme catalyses tRNA(Glu) + L-glutamate + ATP = L-glutamyl-tRNA(Glu) + AMP + diphosphate. Catalyzes the attachment of glutamate to tRNA(Glu) in a two-step reaction: glutamate is first activated by ATP to form Glu-AMP and then transferred to the acceptor end of tRNA(Glu). The sequence is that of Glutamate--tRNA ligase 2 from Brucella canis (strain ATCC 23365 / NCTC 10854 / RM-666).